The following is a 423-amino-acid chain: Citrate synthase-like protein clz17 (423 aa).

Catalysis depends on residues histidine 357 and aspartate 413.

Belongs to the citrate synthase family.

Its pathway is secondary metabolite biosynthesis. In terms of biological role, citrate synthase-like protein; part of the gene cluster that mediates the biosynthesis of squalestatin S1 (SQS1, also known as zaragozic acid A), a heavily oxidized fungal polyketide that offers potent cholesterol lowering activity by targeting squalene synthase (SS). SQS1 is composed of a 2,8-dioxobicyclic[3.2.1]octane-3,4,5-tricarboxyclic acid core that is connected to two lipophilic polyketide arms. These initial steps feature the priming of an unusual benzoic acid starter unit onto the highly reducing polyketide synthase clz14, followed by oxaloacetate extension and product release to generate a tricarboxylic acid containing product. The phenylalanine ammonia lyase (PAL) clz10 and the acyl-CoA ligase clz12 are involved in transforming phenylalanine into benzoyl-CoA. The citrate synthase-like protein clz17 is involved in connecting the C-alpha-carbons of the hexaketide chain and oxaloacetate to afford the tricarboxylic acid unit. The potential hydrolytic enzymes, clz11 and clz13, are in close proximity to pks2 and may participate in product release. On the other side, the tetraketide arm is synthesized by a the squalestatin tetraketide synthase clz2 and enzymatically esterified to the core in the last biosynthetic step, by the acetyltransferase clz6. The biosynthesis of the tetraketide must involve 3 rounds of chain extension. After the first and second rounds methyl-transfer occurs, and in all rounds of extension the ketoreductase and dehydratase are active. The enoyl reductase and C-MeT of clz2 are not active in the final round of extension. The acetyltransferase clz6 appears to have a broad substrate selectivity for its acyl CoA substrate, allowing the in vitro synthesis of novel squalestatins. The biosynthesis of SQS1 requires several oxidative steps likely performed by oxidoreductases clz3, clz15 and clz16. Finally, in support of the identification of the cluster as being responsible for SQS1 production, the cluster contains a gene encoding a putative squalene synthase (SS) clz20, suggesting a likely mechanism for self-resistance. This Cochliobolus lunatus (Filamentous fungus) protein is Citrate synthase-like protein clz17.